The primary structure comprises 436 residues: UPF0597 protein YhaM (436 aa).

Belongs to the UPF0597 family.

This chain is UPF0597 protein YhaM, found in Escherichia coli O7:K1 (strain IAI39 / ExPEC).